Here is a 363-residue protein sequence, read N- to C-terminus: Carbamoyl phosphate synthase small chain (363 aa).

The interval 1-172 (MTKRILMLED…AFASPGDGKR (172 aa)) is CPSase. S46, G220, and G222 together coordinate L-glutamine. The Glutamine amidotransferase type-1 domain maps to 172-359 (RVVLVDYGVK…MEMMNGKEEG (188 aa)). C247 functions as the Nucleophile in the catalytic mechanism. L-glutamine-binding residues include L248, Q251, N289, G291, and Y292. Residues H332 and E334 contribute to the active site.

The protein belongs to the CarA family. As to quaternary structure, composed of two chains; the small (or glutamine) chain promotes the hydrolysis of glutamine to ammonia, which is used by the large (or ammonia) chain to synthesize carbamoyl phosphate. Tetramer of heterodimers (alpha,beta)4.

The enzyme catalyses hydrogencarbonate + L-glutamine + 2 ATP + H2O = carbamoyl phosphate + L-glutamate + 2 ADP + phosphate + 2 H(+). The catalysed reaction is L-glutamine + H2O = L-glutamate + NH4(+). The protein operates within amino-acid biosynthesis; L-arginine biosynthesis; carbamoyl phosphate from bicarbonate: step 1/1. Its pathway is pyrimidine metabolism; UMP biosynthesis via de novo pathway; (S)-dihydroorotate from bicarbonate: step 1/3. Its function is as follows. Small subunit of the glutamine-dependent carbamoyl phosphate synthetase (CPSase). CPSase catalyzes the formation of carbamoyl phosphate from the ammonia moiety of glutamine, carbonate, and phosphate donated by ATP, constituting the first step of 2 biosynthetic pathways, one leading to arginine and/or urea and the other to pyrimidine nucleotides. The small subunit (glutamine amidotransferase) binds and cleaves glutamine to supply the large subunit with the substrate ammonia. This Listeria monocytogenes serotype 4b (strain F2365) protein is Carbamoyl phosphate synthase small chain.